Consider the following 555-residue polypeptide: Esterase-5A (555 aa).

A signal peptide spans 1-19 (MHLVRWLICLIQLWIQLGA). Residues Cys87 and Cys106 are joined by a disulfide bond. N-linked (GlcNAc...) asparagine glycans are attached at residues Asn95 and Asn116. Ser210 (acyl-ester intermediate) is an active-site residue. A disulfide bond links Cys262 and Cys274. N-linked (GlcNAc...) asparagine glycans are attached at residues Asn479 and Asn510. Cys518 and Cys539 are disulfide-bonded.

It belongs to the type-B carboxylesterase/lipase family.

The protein resides in the secreted. It carries out the reaction a carboxylic ester + H2O = an alcohol + a carboxylate + H(+). The protein is Esterase-5A (Est-5A) of Drosophila miranda (Fruit fly).